The sequence spans 306 residues: tRNA pseudouridine synthase B (306 aa).

Asp-43 serves as the catalytic Nucleophile.

Belongs to the pseudouridine synthase TruB family. Type 1 subfamily.

The catalysed reaction is uridine(55) in tRNA = pseudouridine(55) in tRNA. Responsible for synthesis of pseudouridine from uracil-55 in the psi GC loop of transfer RNAs. In Heliobacterium modesticaldum (strain ATCC 51547 / Ice1), this protein is tRNA pseudouridine synthase B.